Here is a 765-residue protein sequence, read N- to C-terminus: MNGEADCPTDLEMAAPKGQDRWSQEDMLTLLECMKNNLPSNDSSKFKTTESHMDWEKVAFKDFSGDMCKLKWVEISNEVRKFRTLTELILDAQEHVKNPYKGKKLKKHPDFPKKPLTPYFRFFMEKRAKYAKLHPEMSNLDLTKILSKKYKELPEKKKMKYIQDFQREKQEFERNLARFREDHPDLIQNAKKSDIPEKPKTPQQLWYTHEKKVYLKVRPDATTKEVKDSLGKQWSQLSDKKTLKWIHKALEQRKEYEEIMRDYIQKHPELNISEEGITKSTLTKAERQLKDKFDGRPTKPPPNSYSLYCAELMANMKDVPSTERMVLCSQQWKLLSQKEKDAYHKKCDQKKKDYEVELLRFLESLPEEEQQRVLGEEKMLNINKKQTTSPASKKPSQEGGKGGSEKPKRPVSAMFIFSEEKRRQLQEERPELSESELTRLLARMWNDLTEKKKAKYKAREAALKAQSERKPGGEREDRGKLPESPKRAEEIWQQSVIGDYLARFKNDRVKALKAMEMTWNNMEKKEKLMWIKKAAEDQKRYERELSEMRAPPAATNSSKKMKFQGEPKKPPMNGYQKFSQELLSNGELNHLPLKERMVEIGSRWQRISQSQKEHYKKLAEEQQRQYKVHLDLWVKSLSPQDRAAYKEYISNKRKNMTKLRGPNPKSSRTTLQSKSESEEDDDEEEEDDEEEEEEEEDDENGDSSEDGGDSSESSSEDESEDGDENDDDDDDEDDEDDDDEDEDNESEGSSSSSSSSGDSSDSGSN.

Met1 carries the post-translational modification N-acetylmethionine. Residues 1 to 21 (MNGEADCPTDLEMAAPKGQDR) form a disordered region. 2 consecutive DNA-binding regions (HMG box) follow at residues 112-180 (PKKP…ARFR) and 196-264 (PEKP…RDYI). Thr201 carries the post-translational modification Phosphothreonine. Phosphoserine is present on residues Ser273, Ser336, and Ser364. Positions 298-362 (TKPPPNSYSL…DYEVELLRFL (65 aa)) form a DNA-binding region, HMG box 3. Residues 370–379 (QQRVLGEEKM) show a composition bias toward basic and acidic residues. The interval 370–411 (QQRVLGEEKMLNINKKQTTSPASKKPSQEGGKGGSEKPKRPV) is disordered. Residues Ser389, Ser412, Ser433, Ser435, Ser484, Ser495, Ser546, Ser584, and Ser638 each carry the phosphoserine modification. DNA-binding regions (HMG box) lie at residues 407-475 (PKRP…GGER), 482-549 (PESP…SEMR), and 568-634 (KKPP…DLWV). Residues 456 to 487 (YKAREAALKAQSERKPGGEREDRGKLPESPKR) form a disordered region. Residues 457-487 (KAREAALKAQSERKPGGEREDRGKLPESPKR) are compositionally biased toward basic and acidic residues. Residues 546–576 (SEMRAPPAATNSSKKMKFQGEPKKPPMNGYQ) form a disordered region. The disordered stretch occupies residues 649–765 (ISNKRKNMTK…SGDSSDSGSN (117 aa)). Residues 664 to 674 (PKSSRTTLQSK) show a composition bias toward polar residues. Over residues 677–746 (SEEDDDEEEE…DDDEDEDNES (70 aa)) the composition is skewed to acidic residues. The segment covering 747-765 (EGSSSSSSSSGDSSDSGSN) has biased composition (low complexity).

In terms of assembly, homodimer. Part of Pol I pre-initiation complex (PIC), in which Pol I core assembles with RRN3 and promoter-bound UTBF and SL1/TIF-IB complex. Interacts with TOP2A in the context of Pol I complex. Interacts with TBP. Interacts with TAF1A. Interacts with RASL11A. Binds to IRS1 and PIK3CA. Interacts with DHX33. Interacts with PHF6. Interacts with CEBPA (isoform 1 and isoform 4). Interacts with DDX11. Interacts with NOP53. Interacts with ALKBH2. Post-translationally, phosphorylated and activated by PIK3CA.

The protein localises to the nucleus. It localises to the nucleolus. Recognizes the ribosomal RNA gene promoter and activates transcription mediated by RNA polymerase I through cooperative interactions with the transcription factor SL1/TIF-IB complex. It binds specifically to the upstream control element. In Mus musculus (Mouse), this protein is Nucleolar transcription factor 1 (Ubtf).